Consider the following 358-residue polypeptide: 3-O-methylredipecamine 2-O-methyltransferase IpeOMT3 (358 aa).

S-adenosyl-L-methionine-binding residues include Gly193, Asp216, Asp236, Met237, and Lys250. His254 functions as the Proton acceptor in the catalytic mechanism.

The protein belongs to the class I-like SAM-binding methyltransferase superfamily. Cation-independent O-methyltransferase family. Expressed in roots.

It localises to the cytoplasm. The protein localises to the cytosol. It carries out the reaction (S)-reticuline + S-adenosyl-L-methionine = (S)-laudanine + S-adenosyl-L-homocysteine + H(+). Its pathway is alkaloid biosynthesis. Its function is as follows. O-methyltransferase involved in the biosynthesis of ipecac and benzylisoquinoline monoterpenoid-isoquinoline alkaloids natural products, starting by the condensation of dopamine and secologanin, and including emetine and cephaeline, drugs used both as anti-protozoal (e.g. treatment of ameobiasis) and as emetic agents. Catalyzes 2-O-methylation of 3-O-methylredipecamine and, with less efficiency, the 7-O-methylation of (S)-coclaurine, (R,S)-N-methylcoclaurine, (R,S)-4'-O-methylcoclaurine, (R,S)-6-O-methyllaudanosoline, nororientaline, (S)-norreticuline and (S)-reticuline. The sequence is that of 3-O-methylredipecamine 2-O-methyltransferase IpeOMT3 from Carapichea ipecacuanha (Ipecac).